A 505-amino-acid polypeptide reads, in one-letter code: MSVQVAAPGSTGLGPERLNPEELVRQTRQVVQGLEALRAEHHSLAGHLAEALAGPGPVAGVELLEEKQQVVNHSLEAIELGLGEAQVLLALSAHVGVLEAEKQRLRAQARRLAQENTWLREELEETQRRLRASEEAVAQLEEEKSHLQFLGQLRQYDPPEESQRPDSPPRRDSLASLFPSEEEEKKGPEAAGAAAAQQGGYEIPARLRTLHNLVIQYASQGRYEVAVPLCRQALEDLERSSGHCHPDVATMLNILALVYRDQNKYKEATELLHDALQIREQTLGPEHPAVAATLNNLAVLYGKRGRYREAEPLCQRALEIREKVLGADHPDVAKQLNNLALLCQNQGKFQDVERHYARALSIYEALGGPQDPNVAKTKNNLASAYLKQNKYQQAEELYKEILSQEALPAPLGAPQGGTAGEAQQQVLRRSSSFSKLRESIRRGSEKLVSRLRGESMAGAAGMKRAMSLNMLNVDGPRAARMQLSTQHLNEASRTLSASTQDLSPR.

Positions 1 to 20 (MSVQVAAPGSTGLGPERLNP) are disordered. Residues 90-150 (ALSAHVGVLE…EEEKSHLQFL (61 aa)) adopt a coiled-coil conformation. A disordered region spans residues 154-197 (RQYDPPEESQRPDSPPRRDSLASLFPSEEEEKKGPEAAGAAAAQ). Over residues 161 to 173 (ESQRPDSPPRRDS) the composition is skewed to basic and acidic residues. Ser-173 bears the Phosphoserine mark. TPR repeat units follow at residues 207–240 (LRTL…LERS), 249–282 (ATML…REQT), 291–324 (AATL…REKV), 333–366 (AKQL…YEAL), and 375–408 (AKTK…EALP). The interval 409–439 (APLGAPQGGTAGEAQQQVLRRSSSFSKLRES) is disordered. The segment covering 421–434 (EAQQQVLRRSSSFS) has biased composition (polar residues). Ser-467 is subject to Phosphoserine. Residues 486 to 505 (QHLNEASRTLSASTQDLSPR) form a disordered region. Position 499 is a phosphothreonine (Thr-499). Phosphoserine is present on Ser-503.

Belongs to the kinesin light chain family. Oligomer composed of two heavy chains and two light chains. Associates with microtubulin in an ATP-dependent manner. Interacts with KIF5C. Interacts with ODF1. Interacts with LRGUK. Interacts with VDAC2. As to expression, expressed in postmeiotic male germ cells (at protein level).

It is found in the cytoplasm. It localises to the cytoskeleton. The protein localises to the mitochondrion. Functionally, kinesin is a microtubule-associated force-producing protein that may play a role in organelle transport. Plays a role during spermiogenesis in the development of the sperm tail midpiece and in the normal function of spermatozoa. May play a role in the formation of the mitochondrial sheath formation in the developing spermatid midpiece. This is Kinesin light chain 3 (Klc3) from Rattus norvegicus (Rat).